Reading from the N-terminus, the 656-residue chain is Chaperone protein HtpG (656 aa).

The a; substrate-binding stretch occupies residues 1–359 (MSAQVEQLEF…AEDMSLNVSR (359 aa)). Residues 360–575 (EILQQNRQIN…AFGITPALAR (216 aa)) are b. A c region spans residues 576-656 (IYRASGQDVP…LLADLLSRSM (81 aa)).

The protein belongs to the heat shock protein 90 family. In terms of assembly, homodimer.

It localises to the cytoplasm. Molecular chaperone. Has ATPase activity. This chain is Chaperone protein HtpG, found in Mycobacterium leprae (strain TN).